A 95-amino-acid chain; its full sequence is Large ribosomal subunit protein eL31 (95 aa).

The protein belongs to the eukaryotic ribosomal protein eL31 family. In terms of assembly, part of the 50S ribosomal subunit.

This chain is Large ribosomal subunit protein eL31, found in Pyrococcus furiosus (strain ATCC 43587 / DSM 3638 / JCM 8422 / Vc1).